The following is a 78-amino-acid chain: uncharacterized protein (78 aa).

This is an uncharacterized protein from Dictyostelium discoideum (Social amoeba).